We begin with the raw amino-acid sequence, 211 residues long: Suppressor of cytokine signaling 1 (211 aa).

The segment at 1-53 (MVAHNQVAADNAVSTAAEPRRRPEPSSSSSSSPAAPARPRPCPAVPAPAPGDT) is disordered. Positions 25–35 (PSSSSSSSPAA) are enriched in low complexity. Residues 36–49 (PARPRPCPAVPAPA) show a composition bias toward pro residues. Positions 55 to 66 (FRTFRSHADYRR) are kinase inhibitory region (KIR). The segment at 67-78 (ITRASALLDACG) is extended SH2 subdomain (ESS). Residues 79–174 (FYWGPLSVHG…PLRQRRVRPL (96 aa)) enclose the SH2 domain. The SOCS box domain maps to 161-210 (MLGAPLRQRRVRPLQELCRQRIVATVGRENLARIPLNPVLRDYLSSFPFQ). The tract at residues 173-182 (PLQELCRQRI) is interaction with Elongin BC complex.

This sequence belongs to the SOCS1 family. Interacts with multiple activated signaling proteins of the tyrosine kinase signaling pathway including JAK family kinases, TEC, KIT, GRB2 and VAV. Binding to JAKs is mediated through the KIR and SH2 domains to a phosphorylated tyrosine residue within the JAK JH1 domain. Binds the SH3 domain of GRB2 via diproline determinants in the N-terminus, and the N-terminal regulatory domain of VAV. Interacts with the Elongin BC complex (ELOB and ELOC). Component of an ECS CBC(SOCS1) E3 ubiquitin-protein ligase complex which contains Elongin BC, CUL5, RBX1 and SOCS1. Interacts (via SH2 domain and SOCS box) with TRIM8. Interacts with AXL, CUL2 and FGFR3. Interacts with INSR. Interacts with TRIM8. Interacts with DCUN1D1. Interacts with IFNGR1. In terms of tissue distribution, expressed in all tissues with high expression in spleen, small intestine and peripheral blood leukocytes.

It localises to the nucleus. The protein resides in the cytoplasmic vesicle. It participates in protein modification; protein ubiquitination. In terms of biological role, essential negative regulator of type I and type II interferon (IFN) signaling, as well as that of other cytokines, including IL2, IL4, IL6 and leukemia inhibitory factor (LIF). Downregulates cytokine signaling by inhibiting the JAK/STAT signaling pathway. Acts by binding to JAK proteins and to IFNGR1 and inhibiting their kinase activity. In vitro, suppresses Tec protein-tyrosine activity. Regulates IFN-gamma (IFNG)-mediated sensory neuron survival. Probable substrate recognition component of an ECS (Elongin BC-CUL2/5-SOCS-box protein) E3 ubiquitin ligase complex which mediates the ubiquitination and subsequent proteasomal degradation of target proteins. The protein is Suppressor of cytokine signaling 1 (SOCS1) of Homo sapiens (Human).